The following is a 505-amino-acid chain: Deoxyguanosinetriphosphate triphosphohydrolase (505 aa).

An HD domain is found at 66-273; that stretch reads RLTHSMEVQQ…MEAADDISYC (208 aa).

The protein belongs to the dGTPase family. Type 1 subfamily. In terms of assembly, homotetramer. Mg(2+) serves as cofactor.

The catalysed reaction is dGTP + H2O = 2'-deoxyguanosine + triphosphate + H(+). Functionally, dGTPase preferentially hydrolyzes dGTP over the other canonical NTPs. This is Deoxyguanosinetriphosphate triphosphohydrolase from Salmonella choleraesuis (strain SC-B67).